A 191-amino-acid chain; its full sequence is Methylated-DNA--protein-cysteine methyltransferase (191 aa).

The DNA site is built by tyrosine 120 and arginine 134. Cysteine 151 acts as the Nucleophile; methyl group acceptor in catalysis.

The protein belongs to the MGMT family.

It is found in the nucleus. The enzyme catalyses a 6-O-methyl-2'-deoxyguanosine in DNA + L-cysteinyl-[protein] = S-methyl-L-cysteinyl-[protein] + a 2'-deoxyguanosine in DNA. It catalyses the reaction a 4-O-methyl-thymidine in DNA + L-cysteinyl-[protein] = a thymidine in DNA + S-methyl-L-cysteinyl-[protein]. Involved in the cellular defense against the biological effects of O6-methylguanine (O6-MeG) and O4-methylthymine (O4-MeT) in DNA. Repairs the methylated nucleobase in DNA by stoichiometrically transferring the methyl group to a cysteine residue in the enzyme. This is a suicide reaction: the enzyme is irreversibly inactivated. This is Methylated-DNA--protein-cysteine methyltransferase (MGT1) from Debaryomyces hansenii (strain ATCC 36239 / CBS 767 / BCRC 21394 / JCM 1990 / NBRC 0083 / IGC 2968) (Yeast).